A 154-amino-acid polypeptide reads, in one-letter code: Myoglobin (154 aa).

In terms of domain architecture, Globin spans 2-148 (GLSDGEWQLV…FRNDIAAKYK (147 aa)). S4 bears the Phosphoserine mark. Residue H65 participates in nitrite binding. Residue H65 participates in O2 binding. T68 is subject to Phosphothreonine. H94 is a binding site for heme b.

The protein belongs to the globin family. In terms of assembly, monomeric.

Its subcellular location is the cytoplasm. It is found in the sarcoplasm. The enzyme catalyses Fe(III)-heme b-[protein] + nitric oxide + H2O = Fe(II)-heme b-[protein] + nitrite + 2 H(+). It catalyses the reaction H2O2 + AH2 = A + 2 H2O. Its function is as follows. Monomeric heme protein which primary function is to store oxygen and facilitate its diffusion within muscle tissues. Reversibly binds oxygen through a pentacoordinated heme iron and enables its timely and efficient release as needed during periods of heightened demand. Depending on the oxidative conditions of tissues and cells, and in addition to its ability to bind oxygen, it also has a nitrite reductase activity whereby it regulates the production of bioactive nitric oxide. Under stress conditions, like hypoxia and anoxia, it also protects cells against reactive oxygen species thanks to its pseudoperoxidase activity. This Lepilemur mustelinus (Weasel sportive lemur) protein is Myoglobin (MB).